The following is a 1430-amino-acid chain: Caskin-1 (1430 aa).

6 ANK repeats span residues 48-77 (DGFSALHHAALNGNTELISLLLEAQAAVDI), 81-110 (KGMRPLHYAAWQGRKEPMKLVLKAGSAVNV), 114-143 (EGHIPLHLAAQHGHYDVSEMLLQHQSNPCI), 147-176 (SGKTPLDLACEFGRVGVVQLLLSSNMCAAL), 188-217 (NGTSPLHLAAKNGHIDIIRLLLQAGIDINR), and 220-249 (KSGTALHEAALCGKTEVVRLLLDSGINAQV). Position 253 is a phosphotyrosine (tyrosine 253). The SH3 domain occupies 281 to 347 (SAALQVRATK…PSSLGEAIVK (67 aa)). The segment at 348 to 372 (RAGSRTGSEPSPPQGGGSLGPSAPP) is disordered. Position 358 is a phosphoserine (serine 358). Residues 375–471 (IWVLRKPFAG…PKKLESSSAS (97 aa)) are CASK-binding. At arginine 398 the chain carries Omega-N-methylarginine. Polar residues predominate over residues 421–430 (QKSVSESSPG). Residues 421-472 (QKSVSESSPGDSPVKPPEGSSGAARSQPPAAHAGQVYGEQPPKKLESSSASE) form a disordered region. Residues serine 423 and serine 432 each carry the phosphoserine modification. SAM domains lie at 474–537 (KSAE…LNIP) and 543–607 (HKPA…LAEL). Residues serine 635 and serine 648 each carry the phosphoserine modification. Residues 667-679 (LSGPAEAGAAAAE) are compositionally biased toward low complexity. Disordered regions lie at residues 667 to 1001 (LSGP…SAGS), 1015 to 1040 (GGGGRAIRRPPEGHPTPRPASPDPGR), 1055 to 1371 (GPDG…RQKL), and 1388 to 1407 (KIRQEDGQGPRPSSIEEKST). Positions 683-711 (NHLPATPRTTSRQESSLSGRARHMSSSQE) are enriched in polar residues. Phosphoserine is present on residues serine 722 and serine 727. Threonine 740 is modified (phosphothreonine). Serine 790 bears the Phosphoserine mark. The segment covering 847–859 (PPAPGPVPPPVPA) has biased composition (pro residues). Serine 890, serine 892, and serine 988 each carry phosphoserine. Residues 1027–1036 (GHPTPRPASP) are compositionally biased toward pro residues. Phosphothreonine is present on threonine 1066. At serine 1068 the chain carries Phosphoserine. A compositionally biased stretch (basic and acidic residues) spans 1147–1159 (DTVKRRPKAKEPD). Residues 1190 to 1214 (PELPPPPPPAEPPPTDLMPLPPLPL) show a composition bias toward pro residues. Serine 1258 bears the Phosphoserine mark. Residue threonine 1267 is modified to Phosphothreonine. A compositionally biased stretch (pro residues) spans 1267-1282 (TPPPVSPKPPPPPTAP). 3 stretches are compositionally biased toward low complexity: residues 1283–1298 (KPAKALAGLQSSSATP), 1308–1326 (PPAALIKPASSPPSQSASP), and 1344–1358 (PRAAASVVSGPPVAS). Phosphoserine is present on serine 1362. Residues 1388–1406 (KIRQEDGQGPRPSSIEEKS) show a composition bias toward basic and acidic residues.

Polymerizes, via the tandem SAM domains, to form long, 8 nM wide fibers, upon which other proteins can assemble. Binds the CaM kinase domain of CASK. Forms a ternary complex with CASK and LIN7A, LIN7B or LIN7C. Competes with APBA1 that forms a similar complex with CASK and LIN7 proteins. The tripartite complex CASKIN1/CASK/LIN7(A/B/C) binds the cytoplasmic tail of NRXN1. As to expression, expressed in brain. Localized primarily to the neuropil and enriched in synaptic areas (at protein level).

It localises to the cytoplasm. Functionally, may link the scaffolding protein CASK to downstream intracellular effectors. The sequence is that of Caskin-1 (Caskin1) from Rattus norvegicus (Rat).